The sequence spans 131 residues: D-ribose pyranase (131 aa).

The Proton donor role is filled by His-20. Residues Asp-28, His-98, and 120–122 contribute to the substrate site; that span reads YAN.

The protein belongs to the RbsD / FucU family. RbsD subfamily. As to quaternary structure, homodecamer.

It is found in the cytoplasm. The enzyme catalyses beta-D-ribopyranose = beta-D-ribofuranose. Its pathway is carbohydrate metabolism; D-ribose degradation; D-ribose 5-phosphate from beta-D-ribopyranose: step 1/2. Catalyzes the interconversion of beta-pyran and beta-furan forms of D-ribose. The chain is D-ribose pyranase from Bacillus anthracis (strain A0248).